The following is a 216-amino-acid chain: Ribose-5-phosphate isomerase A (216 aa).

Residues threonine 26–threonine 29, aspartate 79–aspartate 82, and lysine 92–glycine 95 each bind substrate. Catalysis depends on glutamate 101, which acts as the Proton acceptor. Residue lysine 119 participates in substrate binding.

It belongs to the ribose 5-phosphate isomerase family. Homodimer.

It carries out the reaction aldehydo-D-ribose 5-phosphate = D-ribulose 5-phosphate. The protein operates within carbohydrate degradation; pentose phosphate pathway; D-ribose 5-phosphate from D-ribulose 5-phosphate (non-oxidative stage): step 1/1. Catalyzes the reversible conversion of ribose-5-phosphate to ribulose 5-phosphate. This Legionella pneumophila (strain Corby) protein is Ribose-5-phosphate isomerase A.